Here is a 414-residue protein sequence, read N- to C-terminus: Serine hydroxymethyltransferase (414 aa).

Residues Leu121 and 125–127 contribute to the (6S)-5,6,7,8-tetrahydrofolate site; that span reads GHL. Lys229 is subject to N6-(pyridoxal phosphate)lysine.

It belongs to the SHMT family. As to quaternary structure, homodimer. Requires pyridoxal 5'-phosphate as cofactor.

The protein resides in the cytoplasm. The catalysed reaction is (6R)-5,10-methylene-5,6,7,8-tetrahydrofolate + glycine + H2O = (6S)-5,6,7,8-tetrahydrofolate + L-serine. Its pathway is one-carbon metabolism; tetrahydrofolate interconversion. The protein operates within amino-acid biosynthesis; glycine biosynthesis; glycine from L-serine: step 1/1. Its function is as follows. Catalyzes the reversible interconversion of serine and glycine with tetrahydrofolate (THF) serving as the one-carbon carrier. This reaction serves as the major source of one-carbon groups required for the biosynthesis of purines, thymidylate, methionine, and other important biomolecules. Also exhibits THF-independent aldolase activity toward beta-hydroxyamino acids, producing glycine and aldehydes, via a retro-aldol mechanism. This Janthinobacterium sp. (strain Marseille) (Minibacterium massiliensis) protein is Serine hydroxymethyltransferase.